The sequence spans 168 residues: ATP synthase subunit b, sodium ion specific (168 aa).

Residues 9-29 form a helical membrane-spanning segment; it reads VSIDINMFWQIINFLILMFFF.

Belongs to the ATPase B chain family. F-type ATPases have 2 components, F(1) - the catalytic core - and F(0) - the membrane proton channel. F(1) has five subunits: alpha(3), beta(3), gamma(1), delta(1), epsilon(1). F(0) has three main subunits: a(1), b(2) and c(10-14). The alpha and beta chains form an alternating ring which encloses part of the gamma chain. F(1) is attached to F(0) by a central stalk formed by the gamma and epsilon chains, while a peripheral stalk is formed by the delta and b chains.

The protein resides in the cell inner membrane. F(1)F(0) ATP synthase produces ATP from ADP in the presence of a proton or sodium gradient. F-type ATPases consist of two structural domains, F(1) containing the extramembraneous catalytic core and F(0) containing the membrane proton channel, linked together by a central stalk and a peripheral stalk. During catalysis, ATP synthesis in the catalytic domain of F(1) is coupled via a rotary mechanism of the central stalk subunits to proton translocation. Its function is as follows. Component of the F(0) channel, it forms part of the peripheral stalk, linking F(1) to F(0). In Propionigenium modestum, this protein is ATP synthase subunit b, sodium ion specific (atpF).